The following is a 548-amino-acid chain: MDSQRNLLVIALLFVSFMIWQAWEQDKNPQPQTQQTTQTTTTAAGSAADQGVPASGQGKMITVKTDVLDLTINTRGGDVEQALLPAYPKELGSNEPFQLLETTPQFIYQAQSGLTGRDGPDNPANGPRPLYNVEKEAFVLADGQNELQVPMTYTDAAGNTFTKTFVFKRGDYAVNVNYSVQNTGEKPLEVSTFGQLKQSVNLPPHRDTGSSNFALHTFRGAAYSTPDEKYEKYKFDTIADNENLNVSSKGGWVAMLQQYFATAWIPRNDGTNNFYTANLGNGIVAIGYKAQPVLVQPGQTGAMTSTLWVGPEIQDKMAAVAPHLDLTVDYGWLWFISQPLFKLLKWIHSFVGNWGFSIIIITFIVRGIMYPLTKAQYTSMAKMRMLQPKIQAMRERLGDDKQRQSQEMMALYKAEKVNPLGGCFPLIIQMPIFLALYYMLMGSIELRHAPFALWIHDLSAQDPYYILPILMGVTMFFIQKMSPTTVTDPMQQKIMTFMPVIFTVFFLWFPSGLVLYYIVSNLVTIIQQQLIYRGLEKRGLHSSEKKKS.

Residues 6 to 26 traverse the membrane as a helical segment; sequence NLLVIALLFVSFMIWQAWEQD. Positions 28–56 are disordered; it reads NPQPQTQQTTQTTTTAAGSAADQGVPASG. Residues 29–42 are compositionally biased toward low complexity; sequence PQPQTQQTTQTTTT. 4 consecutive transmembrane segments (helical) span residues 350–370, 424–444, 458–478, and 499–519; these read FVGNWGFSIIIITFIVRGIMY, FPLIIQMPIFLALYYMLMGSI, LSAQDPYYILPILMGVTMFFI, and PVIFTVFFLWFPSGLVLYYIV.

The protein belongs to the OXA1/ALB3/YidC family. Type 1 subfamily. Interacts with the Sec translocase complex via SecD. Specifically interacts with transmembrane segments of nascent integral membrane proteins during membrane integration.

It is found in the cell inner membrane. Functionally, required for the insertion and/or proper folding and/or complex formation of integral membrane proteins into the membrane. Involved in integration of membrane proteins that insert both dependently and independently of the Sec translocase complex, as well as at least some lipoproteins. Aids folding of multispanning membrane proteins. The protein is Membrane protein insertase YidC of Salmonella dublin (strain CT_02021853).